Reading from the N-terminus, the 302-residue chain is Probable 2-(5''-triphosphoribosyl)-3'-dephosphocoenzyme-A synthase 1 (302 aa).

Belongs to the CitG/MdcB family.

It catalyses the reaction 3'-dephospho-CoA + ATP = 2'-(5''-triphospho-alpha-D-ribosyl)-3'-dephospho-CoA + adenine. In Salmonella typhimurium (strain LT2 / SGSC1412 / ATCC 700720), this protein is Probable 2-(5''-triphosphoribosyl)-3'-dephosphocoenzyme-A synthase 1.